Consider the following 501-residue polypeptide: ATP synthase subunit alpha (501 aa).

Residue 169–176 (GDRQTGKT) coordinates ATP.

This sequence belongs to the ATPase alpha/beta chains family. As to quaternary structure, F-type ATPases have 2 components, CF(1) - the catalytic core - and CF(0) - the membrane proton channel. CF(1) has five subunits: alpha(3), beta(3), gamma(1), delta(1), epsilon(1). CF(0) has three main subunits: a(1), b(2) and c(9-12). The alpha and beta chains form an alternating ring which encloses part of the gamma chain. CF(1) is attached to CF(0) by a central stalk formed by the gamma and epsilon chains, while a peripheral stalk is formed by the delta and b chains.

Its subcellular location is the cell membrane. It catalyses the reaction ATP + H2O + 4 H(+)(in) = ADP + phosphate + 5 H(+)(out). Functionally, produces ATP from ADP in the presence of a proton gradient across the membrane. The alpha chain is a regulatory subunit. This Streptococcus mutans serotype c (strain ATCC 700610 / UA159) protein is ATP synthase subunit alpha.